Reading from the N-terminus, the 627-residue chain is Lactose permease (627 aa).

Residues 1–460 are permease; the sequence is MKKKLVSRLS…AEIVDQLETQ (460 aa). Helical transmembrane passes span 13 to 33, 46 to 66, 84 to 104, 111 to 131, 159 to 179, 193 to 213, 244 to 264, 281 to 301, 309 to 329, 336 to 356, 392 to 412, and 419 to 439; these read AGAF…IVFV, IFII…LDPL, WVVG…TDFG, PVVY…FYSF, VGST…ILFF, WFFF…TVGL, LLWL…LNAL, LLYT…PSLA, LFYA…VASG, VGAE…LMII, WFVS…ASTI, and VFKL…VSIF. Residues 493-597 form the PTS EIIA type-1 domain; the sequence is DPVFADKKLG…DDTVIVTVIN (105 aa). Histidine 545 is modified (phosphohistidine; by HPr).

The protein in the N-terminal section; belongs to the sodium:galactoside symporter (TC 2.A.2) family.

The protein resides in the cell membrane. Its function is as follows. Responsible for transport of beta-galactosides into the cell, with the concomitant uptake of protons (symport system), and also for transport of homologous and heterologous exchange of beta-galactosides. The chain is Lactose permease (lacY) from Lactobacillus delbrueckii subsp. bulgaricus (strain ATCC 11842 / DSM 20081 / BCRC 10696 / JCM 1002 / NBRC 13953 / NCIMB 11778 / NCTC 12712 / WDCM 00102 / Lb 14).